Consider the following 73-residue polypeptide: Large ribosomal subunit protein bL31 (73 aa).

The protein belongs to the bacterial ribosomal protein bL31 family. Type A subfamily. Part of the 50S ribosomal subunit.

Binds the 23S rRNA. This is Large ribosomal subunit protein bL31 from Sinorhizobium fredii (strain NBRC 101917 / NGR234).